Reading from the N-terminus, the 371-residue chain is UDP-N-acetylglucosamine--N-acetylmuramyl-(pentapeptide) pyrophosphoryl-undecaprenol N-acetylglucosamine transferase (371 aa).

Residues 15 to 17 (TGG), Asn126, Arg172, Ser199, Ile256, 275 to 280 (ALTVSE), and Gln301 contribute to the UDP-N-acetyl-alpha-D-glucosamine site.

Belongs to the glycosyltransferase 28 family. MurG subfamily.

It localises to the cell inner membrane. It carries out the reaction di-trans,octa-cis-undecaprenyl diphospho-N-acetyl-alpha-D-muramoyl-L-alanyl-D-glutamyl-meso-2,6-diaminopimeloyl-D-alanyl-D-alanine + UDP-N-acetyl-alpha-D-glucosamine = di-trans,octa-cis-undecaprenyl diphospho-[N-acetyl-alpha-D-glucosaminyl-(1-&gt;4)]-N-acetyl-alpha-D-muramoyl-L-alanyl-D-glutamyl-meso-2,6-diaminopimeloyl-D-alanyl-D-alanine + UDP + H(+). The protein operates within cell wall biogenesis; peptidoglycan biosynthesis. Cell wall formation. Catalyzes the transfer of a GlcNAc subunit on undecaprenyl-pyrophosphoryl-MurNAc-pentapeptide (lipid intermediate I) to form undecaprenyl-pyrophosphoryl-MurNAc-(pentapeptide)GlcNAc (lipid intermediate II). The sequence is that of UDP-N-acetylglucosamine--N-acetylmuramyl-(pentapeptide) pyrophosphoryl-undecaprenol N-acetylglucosamine transferase from Francisella tularensis subsp. tularensis (strain WY96-3418).